Reading from the N-terminus, the 371-residue chain is N-acetyldiaminopimelate deacetylase (371 aa).

Residue aspartate 68 is part of the active site. The active-site Proton acceptor is glutamate 127.

Belongs to the peptidase M20A family. N-acetyldiaminopimelate deacetylase subfamily.

It catalyses the reaction N-acetyl-(2S,6S)-2,6-diaminopimelate + H2O = (2S,6S)-2,6-diaminopimelate + acetate. It functions in the pathway amino-acid biosynthesis; L-lysine biosynthesis via DAP pathway; LL-2,6-diaminopimelate from (S)-tetrahydrodipicolinate (acetylase route): step 3/3. Its function is as follows. Catalyzes the conversion of N-acetyl-diaminopimelate to diaminopimelate and acetate. The protein is N-acetyldiaminopimelate deacetylase of Halalkalibacterium halodurans (strain ATCC BAA-125 / DSM 18197 / FERM 7344 / JCM 9153 / C-125) (Bacillus halodurans).